The sequence spans 254 residues: Caffeoyl-CoA O-methyltransferase (254 aa).

Positions 1 to 25 (MATTNVEENKQTQEQQPKEIKHQEV) are disordered. The segment covering 7 to 25 (EENKQTQEQQPKEIKHQEV) has biased composition (basic and acidic residues). Residue K28 participates in substrate binding. S-adenosyl-L-methionine contacts are provided by residues T70, E92, 94–95 (GV), S100, D118, and A147. D170 lines the substrate pocket. Residue D170 coordinates a divalent metal cation. An S-adenosyl-L-methionine-binding site is contributed by D172. 2 residues coordinate a divalent metal cation: D196 and N197. Substrate is bound at residue N201.

It belongs to the class I-like SAM-binding methyltransferase superfamily. Cation-dependent O-methyltransferase family. CCoAMT subfamily. A divalent metal cation serves as cofactor.

It carries out the reaction (E)-caffeoyl-CoA + S-adenosyl-L-methionine = (E)-feruloyl-CoA + S-adenosyl-L-homocysteine + H(+). It participates in aromatic compound metabolism; phenylpropanoid biosynthesis. In terms of biological role, methylates caffeoyl-CoA to feruloyl-CoA and 5-hydroxyferuloyl-CoA to sinapoyl-CoA. Plays a role in the synthesis of feruloylated polysaccharides. Involved in the reinforcement of the plant cell wall. Also involved in the responding to wounding or pathogen challenge by the increased formation of cell wall-bound ferulic acid polymers. The protein is Caffeoyl-CoA O-methyltransferase of Mesembryanthemum crystallinum (Common ice plant).